A 516-amino-acid chain; its full sequence is 7-chloro-L-tryptophan 6-halogenase KtzR (516 aa).

FAD contacts are provided by G6, T8, A9, E42, and A43. The active site involves K71. V195 contacts FAD. Residues T357 and G358 each coordinate chloride. I359 provides a ligand contact to FAD.

It belongs to the flavin-dependent halogenase family. Bacterial tryptophan halogenase subfamily.

The catalysed reaction is 7-chloro-L-tryptophan + FADH2 + chloride + O2 = 6,7-dichloro-L-tryptophan + FAD + 2 H2O. Functionally, involved in the biosynthesis of kutznerides, actinomycete-derived antifungal and antimicrobial cyclic hexadepsipeptides. Together with KtzQ, catalyzes the regiospecific dichlorination of L-tryptophan (L-Trp) to produce 6,7-dichloro-L-tryptophan. KtzR catalyzes the chlorination of 7-chloro-L-tryptophan at C6 position to yield 6,7-dichloro-L-tryptophan. Can also use L-Trp as substrate and form 6-chloro-L-tryptophan, but has a 120-fold preference for 7-chloro-L-tryptophan over L-Trp. Cannot use piperazic acid or gamma,delta-dehydropiperazic acid. The polypeptide is 7-chloro-L-tryptophan 6-halogenase KtzR (Kutzneria sp. (strain 744)).